The primary structure comprises 216 residues: Regulatory protein RecX (216 aa).

This sequence belongs to the RecX family.

Its subcellular location is the cytoplasm. Functionally, modulates RecA activity. This chain is Regulatory protein RecX, found in Clostridium tetani (strain Massachusetts / E88).